The following is a 160-amino-acid chain: Cytochrome b6-f complex subunit 4 (160 aa).

Transmembrane regions (helical) follow at residues 36–56 (LLYIFPVVILGTIACNVGLAV), 95–115 (LLGVLLMVSVPVGLLTVPFLE), and 131–151 (TVFLIGTAVALWLGIGATLPI).

Belongs to the cytochrome b family. PetD subfamily. The 4 large subunits of the cytochrome b6-f complex are cytochrome b6, subunit IV (17 kDa polypeptide, petD), cytochrome f and the Rieske protein, while the 4 small subunits are petG, petL, petM and petN. The complex functions as a dimer.

The protein resides in the plastid. It localises to the chloroplast thylakoid membrane. Component of the cytochrome b6-f complex, which mediates electron transfer between photosystem II (PSII) and photosystem I (PSI), cyclic electron flow around PSI, and state transitions. This chain is Cytochrome b6-f complex subunit 4, found in Daucus carota (Wild carrot).